The primary structure comprises 334 residues: Ribosomal RNA small subunit methyltransferase H (334 aa).

S-adenosyl-L-methionine is bound by residues 54–56, D74, F100, D121, and Q128; that span reads GGH. The segment at 272–318 is disordered; that stretch reads RHSKGQYPEDENLPMPPKRPRYFSKPKRVGPSKAEISNNPRSRSAWL. The segment covering 289-301 has biased composition (basic residues); the sequence is KRPRYFSKPKRVG.

Belongs to the methyltransferase superfamily. RsmH family.

The protein localises to the cytoplasm. It carries out the reaction cytidine(1402) in 16S rRNA + S-adenosyl-L-methionine = N(4)-methylcytidine(1402) in 16S rRNA + S-adenosyl-L-homocysteine + H(+). In terms of biological role, specifically methylates the N4 position of cytidine in position 1402 (C1402) of 16S rRNA. The chain is Ribosomal RNA small subunit methyltransferase H from Psychrobacter arcticus (strain DSM 17307 / VKM B-2377 / 273-4).